The chain runs to 267 residues: NAD kinase 2 (267 aa).

The active-site Proton acceptor is the Asp-52. NAD(+)-binding positions include 52 to 53, 124 to 125, Arg-151, Asp-153, 164 to 169, and Ala-188; these read DG, NE, and TGYNKS.

It belongs to the NAD kinase family. A divalent metal cation is required as a cofactor.

Its subcellular location is the cytoplasm. It carries out the reaction NAD(+) + ATP = ADP + NADP(+) + H(+). In terms of biological role, involved in the regulation of the intracellular balance of NAD and NADP, and is a key enzyme in the biosynthesis of NADP. Catalyzes specifically the phosphorylation on 2'-hydroxyl of the adenosine moiety of NAD to yield NADP. The sequence is that of NAD kinase 2 from Geobacillus kaustophilus (strain HTA426).